A 217-amino-acid chain; its full sequence is Somatotropin (217 aa).

The signal sequence occupies residues 1-26; that stretch reads MATGSRTSLLLAFTLLCLPQLKEAGA. Histidine 44 is a binding site for Zn(2+). The cysteines at positions 79 and 191 are disulfide-linked. Position 132 is a phosphoserine (serine 132). Glutamate 200 lines the Zn(2+) pocket. A disulfide bridge connects residues cysteine 208 and cysteine 215.

The protein belongs to the somatotropin/prolactin family.

It is found in the secreted. In terms of biological role, plays an important role in growth control. Its major role in stimulating body growth is to stimulate the liver and other tissues to secrete IGF1. It stimulates both the differentiation and proliferation of myoblasts. It also stimulates amino acid uptake and protein synthesis in muscle and other tissues. In Saimiri boliviensis boliviensis (Bolivian squirrel monkey), this protein is Somatotropin (GH1).